The sequence spans 223 residues: Oxaloacetate tautomerase FAHD1, mitochondrial (223 aa).

Residues 1–30 constitute a mitochondrion transit peptide; the sequence is MATSMIQRMFKQGTKIVCVGRNYAAHAKEL. The Mg(2+) site is built by E67, E69, and D98.

The protein belongs to the FAH family. It depends on Mg(2+) as a cofactor. The cofactor is Mn(2+).

It is found in the mitochondrion. It carries out the reaction oxaloacetate = enol-oxaloacetate. In terms of biological role, tautomerase that converts enol-oxaloacetate, a strong inhibitor of succinate dehydrogenase, to the physiological keto form of oxaloacetate. The chain is Oxaloacetate tautomerase FAHD1, mitochondrial from Arabidopsis thaliana (Mouse-ear cress).